We begin with the raw amino-acid sequence, 554 residues long: Valerianol synthase TPS1E (554 aa).

Mg(2+)-binding residues include Asp-307 and Asp-311. A DDXXD motif motif is present at residues 326 to 330 (VQRWD). 3 residues coordinate Mg(2+): Asp-452, Ser-456, and Glu-460.

The protein belongs to the terpene synthase family. Requires Mg(2+) as cofactor.

It carries out the reaction (2E,6E)-farnesyl diphosphate + H2O = valerianol + diphosphate. Its pathway is secondary metabolite biosynthesis; terpenoid biosynthesis. Terpene synthase that catalyzes the biosynthesis of the terpene valerianol, which is a volatile compound of floral scent. The protein is Valerianol synthase TPS1E of Camellia hiemalis (Camellia).